A 97-amino-acid chain; its full sequence is Putative membrane protein insertion efficiency factor (97 aa).

A disordered region spans residues 72-97 (VPGAEPDQEQHQCTPLCNHHSEDHSQ).

The protein belongs to the UPF0161 family.

The protein localises to the cell inner membrane. In terms of biological role, could be involved in insertion of integral membrane proteins into the membrane. This chain is Putative membrane protein insertion efficiency factor, found in Alcanivorax borkumensis (strain ATCC 700651 / DSM 11573 / NCIMB 13689 / SK2).